Reading from the N-terminus, the 303-residue chain is Ribonuclease P protein subunit p40 (303 aa).

Component of nuclear RNase P and RNase MRP ribonucleoproteins. RNase P consists of a catalytic RNA moiety and about 10 protein subunits; POP1, POP4, POP5, POP7, RPP14, RPP21, RPP25, RPP30, RPP38 and RPP40. Within the RNase P complex, POP1, POP7 and RPP25 form the 'finger' subcomplex, POP5, RPP14, RPP40 and homodimeric RPP30 form the 'palm' subcomplex, and RPP21, POP4 and RPP38 form the 'wrist' subcomplex. All subunits of the RNase P complex interact with the catalytic RNA. Several subunits of RNase P are also part of the RNase MRP complex. RNase MRP consists of a catalytic RNA moiety and about 8 protein subunits; POP1, POP7, RPP25, RPP30, RPP38, RPP40 and possibly also POP4 and POP5.

The protein resides in the nucleus. It is found in the nucleolus. Component of ribonuclease P, a ribonucleoprotein complex that generates mature tRNA molecules by cleaving their 5'-ends. Also a component of the MRP ribonuclease complex, which cleaves pre-rRNA sequences. This is Ribonuclease P protein subunit p40 (RPP40) from Bos taurus (Bovine).